A 224-amino-acid chain; its full sequence is Uridylate kinase (224 aa).

9 to 10 (GS) serves as a coordination point for ATP. Residue Gly43 coordinates UMP. ATP contacts are provided by Gly44 and Arg48. UMP is bound by residues Asp65 and 113–119 (TEPAHST). The ATP site is built by Thr139, Tyr145, and Asp148.

This sequence belongs to the UMP kinase family. Homohexamer.

It is found in the cytoplasm. It carries out the reaction UMP + ATP = UDP + ADP. It participates in pyrimidine metabolism; CTP biosynthesis via de novo pathway; UDP from UMP (UMPK route): step 1/1. Inhibited by UTP. Its function is as follows. Catalyzes the reversible phosphorylation of UMP to UDP. The sequence is that of Uridylate kinase from Methanothermobacter thermautotrophicus (strain ATCC 29096 / DSM 1053 / JCM 10044 / NBRC 100330 / Delta H) (Methanobacterium thermoautotrophicum).